A 172-amino-acid polypeptide reads, in one-letter code: Ribosome maturation factor RimM (172 aa).

Positions Ala-95–Leu-168 constitute a PRC barrel domain.

Belongs to the RimM family. In terms of assembly, binds ribosomal protein uS19.

It localises to the cytoplasm. In terms of biological role, an accessory protein needed during the final step in the assembly of 30S ribosomal subunit, possibly for assembly of the head region. Essential for efficient processing of 16S rRNA. May be needed both before and after RbfA during the maturation of 16S rRNA. It has affinity for free ribosomal 30S subunits but not for 70S ribosomes. The protein is Ribosome maturation factor RimM of Streptococcus equi subsp. zooepidemicus (strain MGCS10565).